A 459-amino-acid chain; its full sequence is UDP-N-acetylmuramoylalanine--D-glutamate ligase (459 aa).

Position 118–124 (118–124) interacts with ATP; it reads GTNGKTT.

Belongs to the MurCDEF family.

Its subcellular location is the cytoplasm. It catalyses the reaction UDP-N-acetyl-alpha-D-muramoyl-L-alanine + D-glutamate + ATP = UDP-N-acetyl-alpha-D-muramoyl-L-alanyl-D-glutamate + ADP + phosphate + H(+). It functions in the pathway cell wall biogenesis; peptidoglycan biosynthesis. In terms of biological role, cell wall formation. Catalyzes the addition of glutamate to the nucleotide precursor UDP-N-acetylmuramoyl-L-alanine (UMA). This Desulfosudis oleivorans (strain DSM 6200 / JCM 39069 / Hxd3) (Desulfococcus oleovorans) protein is UDP-N-acetylmuramoylalanine--D-glutamate ligase.